A 142-amino-acid polypeptide reads, in one-letter code: Large ribosomal subunit protein uL13 (142 aa).

The protein belongs to the universal ribosomal protein uL13 family. As to quaternary structure, part of the 50S ribosomal subunit.

This protein is one of the early assembly proteins of the 50S ribosomal subunit, although it is not seen to bind rRNA by itself. It is important during the early stages of 50S assembly. The chain is Large ribosomal subunit protein uL13 from Burkholderia mallei (strain NCTC 10247).